Here is a 184-residue protein sequence, read N- to C-terminus: tRNA (cytidine(56)-2'-O)-methyltransferase (184 aa).

S-adenosyl-L-methionine-binding positions include L87, 112 to 116 (GAEKV), and 130 to 137 (VANQPHSE).

The protein belongs to the aTrm56 family. In terms of assembly, homodimer.

It is found in the cytoplasm. It catalyses the reaction cytidine(56) in tRNA + S-adenosyl-L-methionine = 2'-O-methylcytidine(56) in tRNA + S-adenosyl-L-homocysteine + H(+). Specifically catalyzes the AdoMet-dependent 2'-O-ribose methylation of cytidine at position 56 in tRNAs. This Methanocorpusculum labreanum (strain ATCC 43576 / DSM 4855 / Z) protein is tRNA (cytidine(56)-2'-O)-methyltransferase.